A 364-amino-acid chain; its full sequence is Methylthioribose-1-phosphate isomerase (364 aa).

Residues 53–55, arginine 90, and glutamine 200 each bind substrate; that span reads RGA. Aspartate 241 (proton donor) is an active-site residue. Substrate is bound at residue 251 to 252; the sequence is NK.

It belongs to the eIF-2B alpha/beta/delta subunits family. MtnA subfamily.

The enzyme catalyses 5-(methylsulfanyl)-alpha-D-ribose 1-phosphate = 5-(methylsulfanyl)-D-ribulose 1-phosphate. The protein operates within amino-acid biosynthesis; L-methionine biosynthesis via salvage pathway; L-methionine from S-methyl-5-thio-alpha-D-ribose 1-phosphate: step 1/6. Catalyzes the interconversion of methylthioribose-1-phosphate (MTR-1-P) into methylthioribulose-1-phosphate (MTRu-1-P). This Methylobacterium nodulans (strain LMG 21967 / CNCM I-2342 / ORS 2060) protein is Methylthioribose-1-phosphate isomerase.